The primary structure comprises 275 residues: NH(3)-dependent NAD(+) synthetase (275 aa).

46-53 is a binding site for ATP; it reads GISGGQDS. Residue Asp-52 participates in Mg(2+) binding. Arg-140 contacts deamido-NAD(+). Thr-160 contacts ATP. Glu-165 lines the Mg(2+) pocket. 2 residues coordinate deamido-NAD(+): Lys-173 and Asp-180. ATP contacts are provided by Lys-189 and Thr-211. A deamido-NAD(+)-binding site is contributed by 260-261; that stretch reads HK.

This sequence belongs to the NAD synthetase family. In terms of assembly, homodimer.

The enzyme catalyses deamido-NAD(+) + NH4(+) + ATP = AMP + diphosphate + NAD(+) + H(+). It participates in cofactor biosynthesis; NAD(+) biosynthesis; NAD(+) from deamido-NAD(+) (ammonia route): step 1/1. Functionally, catalyzes the ATP-dependent amidation of deamido-NAD to form NAD. Uses ammonia as a nitrogen source. The sequence is that of NH(3)-dependent NAD(+) synthetase from Shigella boydii serotype 4 (strain Sb227).